The sequence spans 140 residues: Mite allergen Der p 21.0101 (140 aa).

Residues 1–19 (MKFIITLFAAIVMAAAVSG) form the signal peptide. Immunodominant conformational IgE-binding epitope stretches follow at residues 20-53 (FIVG…EKGL) and 108-140 (YNYE…DEYY).

This sequence belongs to the mite group 5 allergen family. Monomer. Homodimer. Expressed in the epithelium, lumen and microvilli of the midgut, and in feces.

It is found in the cytoplasm. The protein localises to the endoplasmic reticulum. It localises to the vesicle. The protein resides in the secreted. The polypeptide is Mite allergen Der p 21.0101 (Dermatophagoides pteronyssinus (European house dust mite)).